A 443-amino-acid polypeptide reads, in one-letter code: Probable lysophospholipase BODYGUARD 5 (443 aa).

The first 52 residues, M1–H52, serve as a signal peptide directing secretion. C53 carries N-palmitoyl cysteine lipidation. In terms of domain architecture, AB hydrolase-1 spans V163 to P268. Residue H167 is part of the active site. The active-site Nucleophile is S242. Active-site charge relay system residues include D387 and H415.

It is found in the cell membrane. The protein localises to the secreted. Its subcellular location is the cell wall. In terms of biological role, involved in cuticle development and morphogenesis. This chain is Probable lysophospholipase BODYGUARD 5, found in Arabidopsis thaliana (Mouse-ear cress).